The chain runs to 358 residues: Probable branched-chain-amino-acid aminotransferase (358 aa).

The residue at position 196 (lysine 196) is an N6-(pyridoxal phosphate)lysine.

Belongs to the class-IV pyridoxal-phosphate-dependent aminotransferase family. Pyridoxal 5'-phosphate serves as cofactor.

It carries out the reaction L-leucine + 2-oxoglutarate = 4-methyl-2-oxopentanoate + L-glutamate. The catalysed reaction is L-isoleucine + 2-oxoglutarate = (S)-3-methyl-2-oxopentanoate + L-glutamate. It catalyses the reaction L-valine + 2-oxoglutarate = 3-methyl-2-oxobutanoate + L-glutamate. The protein operates within amino-acid biosynthesis; L-isoleucine biosynthesis; L-isoleucine from 2-oxobutanoate: step 4/4. It participates in amino-acid biosynthesis; L-leucine biosynthesis; L-leucine from 3-methyl-2-oxobutanoate: step 4/4. It functions in the pathway amino-acid biosynthesis; L-valine biosynthesis; L-valine from pyruvate: step 4/4. Functionally, acts on leucine, isoleucine and valine. This chain is Probable branched-chain-amino-acid aminotransferase (ilvE), found in Staphylococcus epidermidis (strain ATCC 12228 / FDA PCI 1200).